The primary structure comprises 343 residues: Cytoplasmic tRNA 2-thiolation protein 1 (343 aa).

The protein belongs to the TtcA family. CTU1/NCS6/ATPBD3 subfamily.

The protein resides in the cytoplasm. It functions in the pathway tRNA modification; 5-methoxycarbonylmethyl-2-thiouridine-tRNA biosynthesis. Functionally, plays a central role in 2-thiolation of mcm(5)S(2)U at tRNA wobble positions of tRNA(Lys), tRNA(Glu) and tRNA(Gln). Directly binds tRNAs and probably acts by catalyzing adenylation of tRNAs, an intermediate required for 2-thiolation. It is unclear whether it acts as a sulfurtransferase that transfers sulfur from thiocarboxylated URM1 onto the uridine of tRNAs at wobble position. The chain is Cytoplasmic tRNA 2-thiolation protein 1 from Drosophila yakuba (Fruit fly).